The following is a 253-amino-acid chain: Allene oxide cyclase 2, chloroplastic (253 aa).

The N-terminal 77 residues, 1–77 (MASSAVSLQS…SQNGNIENPR (77 aa)), are a transit peptide targeting the chloroplast.

This sequence belongs to the allene oxide cyclase family. As to expression, highly expressed in fully developed leaves.

It is found in the plastid. It localises to the chloroplast. It carries out the reaction (9Z,13S,15Z)-12,13-epoxyoctadeca-9,11,15-trienoate = (9S,13S,15Z)-12-oxophyto-10,15-dienoate. Functionally, involved in the production of 12-oxo-phytodienoic acid (OPDA), a precursor of jasmonic acid. In Arabidopsis thaliana (Mouse-ear cress), this protein is Allene oxide cyclase 2, chloroplastic (AOC2).